A 205-amino-acid chain; its full sequence is LexA repressor (205 aa).

Residues 28–48 constitute a DNA-binding region (H-T-H motif); it reads RAELMRAFDFRSPNAAESHLR. Residues S120 and K159 each act as for autocatalytic cleavage activity in the active site.

Belongs to the peptidase S24 family. As to quaternary structure, homodimer.

The enzyme catalyses Hydrolysis of Ala-|-Gly bond in repressor LexA.. In terms of biological role, represses a number of genes involved in the response to DNA damage (SOS response), including recA and lexA. In the presence of single-stranded DNA, RecA interacts with LexA causing an autocatalytic cleavage which disrupts the DNA-binding part of LexA, leading to derepression of the SOS regulon and eventually DNA repair. The sequence is that of LexA repressor from Acidithiobacillus ferrooxidans (strain ATCC 23270 / DSM 14882 / CIP 104768 / NCIMB 8455) (Ferrobacillus ferrooxidans (strain ATCC 23270)).